Reading from the N-terminus, the 145-residue chain is 3-dehydroquinate dehydratase (145 aa).

Tyr24 serves as the catalytic Proton acceptor. 3 residues coordinate substrate: Asn75, His81, and Asp88. Residue His102 is the Proton donor of the active site. Residues 103–104 and Arg113 each bind substrate; that span reads LS.

It belongs to the type-II 3-dehydroquinase family. Homododecamer.

It catalyses the reaction 3-dehydroquinate = 3-dehydroshikimate + H2O. Its pathway is metabolic intermediate biosynthesis; chorismate biosynthesis; chorismate from D-erythrose 4-phosphate and phosphoenolpyruvate: step 3/7. Catalyzes a trans-dehydration via an enolate intermediate. This chain is 3-dehydroquinate dehydratase, found in Chelativorans sp. (strain BNC1).